Consider the following 347-residue polypeptide: MNPMIFIILLTTIMLGTFIVTTSSHWFMTWLGFEMNMMAIVPVLMKKYSPRSMEAATKYFLTQATASMILMLAIIINLMYSGQWTITNMENYTASMLITIALTMKLGLAPFHFWVPEVTQGVSLPSGLILLTWQKIAPLSLLYQTYSSVNMNILLLMSLLSIMIGGWGGLNQTQLRKIMAYSSIAHMGWMMAIMVYNPNLSLLNLLIYIFMTSSMFMLLIFSSSVSTLSLSLTWNKAPIITIMSLTTLLSLGGLPPLTGFLPKWMIIQELTKNNSVILPTLMAILALLNLFFYMRLTYSTALTMFPTMNNTKFMWQFQNTNILSMMLPLITISTLALPLTPMLILLN.

A run of 11 helical transmembrane segments spans residues 1-21 (MNPMIFIILLTTIMLGTFIVT), 25-45 (HWFMTWLGFEMNMMAIVPVLM), 59-79 (YFLTQATASMILMLAIIINLM), 96-116 (MLITIALTMKLGLAPFHFWVP), 122-142 (VSLPSGLILLTWQKIAPLSLL), 149-169 (VNMNILLLMSLLSIMIGGWGG), 178-198 (IMAYSSIAHMGWMMAIMVYNP), 201-221 (SLLNLLIYIFMTSSMFMLLIF), 237-257 (APIITIMSLTTLLSLGGLPPL), 274-294 (NSVILPTLMAILALLNLFFYM), and 326-346 (MLPLITISTLALPLTPMLILL).

The protein belongs to the complex I subunit 2 family. In terms of assembly, core subunit of respiratory chain NADH dehydrogenase (Complex I) which is composed of 45 different subunits. Interacts with TMEM242.

It localises to the mitochondrion inner membrane. It carries out the reaction a ubiquinone + NADH + 5 H(+)(in) = a ubiquinol + NAD(+) + 4 H(+)(out). Functionally, core subunit of the mitochondrial membrane respiratory chain NADH dehydrogenase (Complex I) that is believed to belong to the minimal assembly required for catalysis. Complex I functions in the transfer of electrons from NADH to the respiratory chain. The immediate electron acceptor for the enzyme is believed to be ubiquinone. In Crocidura suaveolens gueldenstaedtii (Gueldenstaedt's shrew), this protein is NADH-ubiquinone oxidoreductase chain 2.